A 146-amino-acid polypeptide reads, in one-letter code: Ribosome maturation factor RimP (146 aa).

This sequence belongs to the RimP family.

The protein resides in the cytoplasm. Required for maturation of 30S ribosomal subunits. In Helicobacter pylori (strain Shi470), this protein is Ribosome maturation factor RimP.